We begin with the raw amino-acid sequence, 377 residues long: Glutamate 5-kinase (377 aa).

Residue Lys17 participates in ATP binding. Residues Ser56, Asp143, and Asn155 each coordinate substrate. An ATP-binding site is contributed by 217–223; it reads SGGMFSK. The PUA domain occupies 282-360; it reads AGDLVIDDGA…CEIESILGKC (79 aa).

This sequence belongs to the glutamate 5-kinase family.

It localises to the cytoplasm. It carries out the reaction L-glutamate + ATP = L-glutamyl 5-phosphate + ADP. The protein operates within amino-acid biosynthesis; L-proline biosynthesis; L-glutamate 5-semialdehyde from L-glutamate: step 1/2. Catalyzes the transfer of a phosphate group to glutamate to form L-glutamate 5-phosphate. The sequence is that of Glutamate 5-kinase from Maridesulfovibrio salexigens (strain ATCC 14822 / DSM 2638 / NCIMB 8403 / VKM B-1763) (Desulfovibrio salexigens).